A 162-amino-acid chain; its full sequence is MKRLKLLGGVMLFAIVSLMVCGCMVVFPKKYPDVLYKEYDVIKIENRTINGVKTAIVYQVKTEIGARSSPYSLDADSKKDIGAITYYVFKNTDVDEVQIICYYAGGGGLQPYYKFKIKRRDAELSGLLNVSEKELPSATLYYIDKLISLGDLWINDRLPVNG.

The chain crosses the membrane as a helical span at residues 7–27 (LGGVMLFAIVSLMVCGCMVVF).

It localises to the membrane. This is an uncharacterized protein from Methanocaldococcus jannaschii (strain ATCC 43067 / DSM 2661 / JAL-1 / JCM 10045 / NBRC 100440) (Methanococcus jannaschii).